Reading from the N-terminus, the 385-residue chain is Neuropeptide Y receptor type 2 (385 aa).

At 1–54 the chain is on the extracellular side; that stretch reads MGPLEAIGEENQTDEMKMELFTKLYLPRYTTPVSELALDPKPELKDSTTLVEVQ. N-linked (GlcNAc...) asparagine glycosylation occurs at Asn11. The helical transmembrane segment at 55 to 75 threads the bilayer; sequence IILIFAYCSIILLGVIGNSLV. The Cytoplasmic portion of the chain corresponds to 76–90; it reads IHVIIKFKSMRTVTN. Residues 91-111 form a helical membrane-spanning segment; that stretch reads FFIANLAVADLLVNTLCLPFT. Residues 112–128 lie on the Extracellular side of the membrane; it reads LVYTLLGEWKLGPVLCH. Cysteines 127 and 207 form a disulfide. A helical transmembrane segment spans residues 129–149; the sequence is LVPYAQALAVHVSTVTLTVIA. At 150 to 169 the chain is on the cytoplasmic side; that stretch reads LDRHRCIVYHLESKISKRIS. A helical membrane pass occupies residues 170–190; sequence FLIIGVAWAVSALLASPLAIF. Residues 191–221 lie on the Extracellular side of the membrane; that stretch reads REYSLIEIIPDFKIVVCSEKWPGEGQLNYGT. Residues 222 to 242 traverse the membrane as a helical segment; sequence IYSVSMLLIQYVLPLAIISYA. Over 243 to 273 the chain is Cytoplasmic; it reads YTRIWTKLKNHVSPGAGNDHYHHRRQKTTKM. Residues 274-294 form a helical membrane-spanning segment; sequence LVCVVVVFAVSWLPFHAFQLV. The Extracellular portion of the chain corresponds to 295–308; it reads SDIDSQVLDLKEYK. A helical transmembrane segment spans residues 309-329; sequence LIYTVFHVIAMCSTFANPLLY. The Cytoplasmic segment spans residues 330-385; that stretch reads GWMNNNYRTAFLTAFQCEQRLDSIHPEVSAAFKARKKLEAKKSQFPGDSFTQPTNV. Residue Cys346 is the site of S-palmitoyl cysteine attachment.

The protein belongs to the G-protein coupled receptor 1 family.

Its subcellular location is the cell membrane. Functionally, receptor for neuropeptide Y and peptide YY. In Gallus gallus (Chicken), this protein is Neuropeptide Y receptor type 2 (NPY2R).